Reading from the N-terminus, the 309-residue chain is Porphobilinogen deaminase (309 aa).

Cys241 bears the S-(dipyrrolylmethanemethyl)cysteine mark.

The protein belongs to the HMBS family. Monomer. Dipyrromethane serves as cofactor.

It catalyses the reaction 4 porphobilinogen + H2O = hydroxymethylbilane + 4 NH4(+). It functions in the pathway porphyrin-containing compound metabolism; protoporphyrin-IX biosynthesis; coproporphyrinogen-III from 5-aminolevulinate: step 2/4. Its function is as follows. Tetrapolymerization of the monopyrrole PBG into the hydroxymethylbilane pre-uroporphyrinogen in several discrete steps. The polypeptide is Porphobilinogen deaminase (Bacillus thuringiensis subsp. konkukian (strain 97-27)).